We begin with the raw amino-acid sequence, 263 residues long: Chorismate mutase 2 (263 aa).

Positions 3-256 (CGDYDDKLSL…QVEYLLRRLD (254 aa)) constitute a Chorismate mutase domain.

In terms of assembly, homodimer. As to expression, expressed in root, stem, stigma, anther, leaf, petal tube, petal limb and sepal tissues with highest levels in petal tubes and stems.

Its subcellular location is the cytoplasm. The protein localises to the cytosol. It catalyses the reaction chorismate = prephenate. It functions in the pathway metabolic intermediate biosynthesis; prephenate biosynthesis; prephenate from chorismate: step 1/1. No allosteric regulation. In terms of biological role, mediates the conversion of chorismate to prephenate. This chain is Chorismate mutase 2, found in Petunia hybrida (Petunia).